Here is a 334-residue protein sequence, read N- to C-terminus: Glutamyl-tRNA reductase (334 aa).

Residues 49–52 (TCNR), Ser-107, 112–114 (EDQ), and Gln-118 each bind substrate. Cys-50 acts as the Nucleophile in catalysis. Residue 186-191 (GNGEMG) coordinates NADP(+).

The protein belongs to the glutamyl-tRNA reductase family. In terms of assembly, homodimer.

The catalysed reaction is (S)-4-amino-5-oxopentanoate + tRNA(Glu) + NADP(+) = L-glutamyl-tRNA(Glu) + NADPH + H(+). It participates in porphyrin-containing compound metabolism; protoporphyrin-IX biosynthesis; 5-aminolevulinate from L-glutamyl-tRNA(Glu): step 1/2. Its function is as follows. Catalyzes the NADPH-dependent reduction of glutamyl-tRNA(Glu) to glutamate 1-semialdehyde (GSA). This Alkaliphilus oremlandii (strain OhILAs) (Clostridium oremlandii (strain OhILAs)) protein is Glutamyl-tRNA reductase.